We begin with the raw amino-acid sequence, 198 residues long: Large ribosomal subunit protein bL25 (198 aa).

It belongs to the bacterial ribosomal protein bL25 family. CTC subfamily. Part of the 50S ribosomal subunit; part of the 5S rRNA/L5/L18/L25 subcomplex. Contacts the 5S rRNA. Binds to the 5S rRNA independently of L5 and L18.

In terms of biological role, this is one of the proteins that binds to the 5S RNA in the ribosome where it forms part of the central protuberance. In Bordetella avium (strain 197N), this protein is Large ribosomal subunit protein bL25.